A 398-amino-acid polypeptide reads, in one-letter code: Arylacetamide deacetylase (398 aa).

Residues 1–4 (GVKT) lie on the Cytoplasmic side of the membrane. A helical; Signal-anchor for type II membrane protein membrane pass occupies residues 5 to 22 (VLLLIVGVLGAYYVYTPL). The Lumenal portion of the chain corresponds to 23–398 (PDNIEEPWRL…QYFEWLRENV (376 aa)). N77 carries N-linked (GlcNAc...) asparagine glycosylation. The short motif at 110–112 (HGG) is the Involved in the stabilization of the negatively charged intermediate by the formation of the oxyanion hole element. Cysteines 115 and 339 form a disulfide. The active site involves S188. N281 is a glycosylation site (N-linked (GlcNAc...) asparagine). Catalysis depends on residues D342 and H372.

It belongs to the 'GDXG' lipolytic enzyme family. Glycosylated.

The protein resides in the endoplasmic reticulum membrane. The protein localises to the microsome membrane. It catalyses the reaction a triacylglycerol + H2O = a diacylglycerol + a fatty acid + H(+). With respect to regulation, inhibited by diisopropylphosphofluoridate (DFP). Its function is as follows. Displays cellular triglyceride lipase activity in liver, increases the levels of intracellular fatty acids derived from the hydrolysis of newly formed triglyceride stores and plays a role in very low-density lipoprotein assembly. Displays serine esterase activity in liver. Deacetylates a variety of arylacetamide substrates, including xenobiotic compounds and procarcinogens, converting them to the primary arylamide compounds and increasing their toxicity. The polypeptide is Arylacetamide deacetylase (Oryctolagus cuniculus (Rabbit)).